We begin with the raw amino-acid sequence, 436 residues long: Serine hydroxymethyltransferase (436 aa).

(6S)-5,6,7,8-tetrahydrofolate-binding positions include Leu-120 and 124-126; that span reads GHL. Lys-229 carries the post-translational modification N6-(pyridoxal phosphate)lysine.

It belongs to the SHMT family. In terms of assembly, homodimer. Requires pyridoxal 5'-phosphate as cofactor.

The protein resides in the cytoplasm. The catalysed reaction is (6R)-5,10-methylene-5,6,7,8-tetrahydrofolate + glycine + H2O = (6S)-5,6,7,8-tetrahydrofolate + L-serine. It participates in one-carbon metabolism; tetrahydrofolate interconversion. It functions in the pathway amino-acid biosynthesis; glycine biosynthesis; glycine from L-serine: step 1/1. In terms of biological role, catalyzes the reversible interconversion of serine and glycine with tetrahydrofolate (THF) serving as the one-carbon carrier. This reaction serves as the major source of one-carbon groups required for the biosynthesis of purines, thymidylate, methionine, and other important biomolecules. Also exhibits THF-independent aldolase activity toward beta-hydroxyamino acids, producing glycine and aldehydes, via a retro-aldol mechanism. This Roseiflexus castenholzii (strain DSM 13941 / HLO8) protein is Serine hydroxymethyltransferase.